The chain runs to 147 residues: Large ribosomal subunit protein uL16 (147 aa).

Belongs to the universal ribosomal protein uL16 family. Part of the 50S ribosomal subunit.

Functionally, binds 23S rRNA and is also seen to make contacts with the A and possibly P site tRNAs. This is Large ribosomal subunit protein uL16 from Clostridium novyi (strain NT).